The primary structure comprises 250 residues: Pyrroloquinoline-quinone synthase (250 aa).

The protein belongs to the PqqC family.

It carries out the reaction 6-(2-amino-2-carboxyethyl)-7,8-dioxo-1,2,3,4,7,8-hexahydroquinoline-2,4-dicarboxylate + 3 O2 = pyrroloquinoline quinone + 2 H2O2 + 2 H2O + H(+). It participates in cofactor biosynthesis; pyrroloquinoline quinone biosynthesis. In terms of biological role, ring cyclization and eight-electron oxidation of 3a-(2-amino-2-carboxyethyl)-4,5-dioxo-4,5,6,7,8,9-hexahydroquinoline-7,9-dicarboxylic-acid to PQQ. This Ectopseudomonas mendocina (strain ymp) (Pseudomonas mendocina) protein is Pyrroloquinoline-quinone synthase.